A 407-amino-acid chain; its full sequence is 1-deoxy-D-xylulose 5-phosphate reductoisomerase (407 aa).

6 residues coordinate NADPH: threonine 25, glycine 26, serine 27, isoleucine 28, asparagine 53, and asparagine 136. Lysine 137 is a binding site for 1-deoxy-D-xylulose 5-phosphate. An NADPH-binding site is contributed by glutamate 138. Aspartate 162 serves as a coordination point for Mn(2+). 1-deoxy-D-xylulose 5-phosphate contacts are provided by serine 163, glutamate 164, serine 188, and histidine 211. Mn(2+) is bound at residue glutamate 164. Position 217 (glycine 217) interacts with NADPH. Residues serine 224, asparagine 229, lysine 230, and glutamate 233 each coordinate 1-deoxy-D-xylulose 5-phosphate. A Mn(2+)-binding site is contributed by glutamate 233.

Belongs to the DXR family. Mg(2+) serves as cofactor. Mn(2+) is required as a cofactor.

The catalysed reaction is 2-C-methyl-D-erythritol 4-phosphate + NADP(+) = 1-deoxy-D-xylulose 5-phosphate + NADPH + H(+). Its pathway is isoprenoid biosynthesis; isopentenyl diphosphate biosynthesis via DXP pathway; isopentenyl diphosphate from 1-deoxy-D-xylulose 5-phosphate: step 1/6. In terms of biological role, catalyzes the NADPH-dependent rearrangement and reduction of 1-deoxy-D-xylulose-5-phosphate (DXP) to 2-C-methyl-D-erythritol 4-phosphate (MEP). This Rhodopseudomonas palustris (strain BisB18) protein is 1-deoxy-D-xylulose 5-phosphate reductoisomerase.